Consider the following 39-residue polypeptide: Cytochrome b559 subunit beta (39 aa).

The chain crosses the membrane as a helical span at residues 14–30; sequence WLAVHGLAVPTVFFLGA. Residue H18 coordinates heme.

It belongs to the PsbE/PsbF family. As to quaternary structure, heterodimer of an alpha subunit and a beta subunit. PSII is composed of 1 copy each of membrane proteins PsbA, PsbB, PsbC, PsbD, PsbE, PsbF, PsbH, PsbI, PsbJ, PsbK, PsbL, PsbM, PsbT, PsbX, PsbY, PsbZ, Psb30/Ycf12, at least 3 peripheral proteins of the oxygen-evolving complex and a large number of cofactors. It forms dimeric complexes. The cofactor is heme b.

It localises to the plastid. The protein resides in the chloroplast thylakoid membrane. In terms of biological role, this b-type cytochrome is tightly associated with the reaction center of photosystem II (PSII). PSII is a light-driven water:plastoquinone oxidoreductase that uses light energy to abstract electrons from H(2)O, generating O(2) and a proton gradient subsequently used for ATP formation. It consists of a core antenna complex that captures photons, and an electron transfer chain that converts photonic excitation into a charge separation. This Physcomitrium patens (Spreading-leaved earth moss) protein is Cytochrome b559 subunit beta.